The primary structure comprises 473 residues: Siroheme synthase (473 aa).

The interval 1-206 (MDYLPIFMKI…GNTGEAEALL (206 aa)) is precorrin-2 dehydrogenase /sirohydrochlorin ferrochelatase. Residues 22 to 23 (TV) and 43 to 44 (PK) each bind NAD(+). A uroporphyrinogen-III C-methyltransferase region spans residues 223 to 473 (GEVYIIGAGP…KSLLDDRVPA (251 aa)). Proline 232 serves as a coordination point for S-adenosyl-L-methionine. Aspartate 255 (proton acceptor) is an active-site residue. Lysine 277 acts as the Proton donor in catalysis. Residues 308 to 310 (GGD), isoleucine 313, 338 to 339 (TA), methionine 390, and glycine 419 each bind S-adenosyl-L-methionine.

It in the N-terminal section; belongs to the precorrin-2 dehydrogenase / sirohydrochlorin ferrochelatase family. In the C-terminal section; belongs to the precorrin methyltransferase family.

The enzyme catalyses uroporphyrinogen III + 2 S-adenosyl-L-methionine = precorrin-2 + 2 S-adenosyl-L-homocysteine + H(+). It carries out the reaction precorrin-2 + NAD(+) = sirohydrochlorin + NADH + 2 H(+). It catalyses the reaction siroheme + 2 H(+) = sirohydrochlorin + Fe(2+). Its pathway is cofactor biosynthesis; adenosylcobalamin biosynthesis; precorrin-2 from uroporphyrinogen III: step 1/1. It participates in cofactor biosynthesis; adenosylcobalamin biosynthesis; sirohydrochlorin from precorrin-2: step 1/1. The protein operates within porphyrin-containing compound metabolism; siroheme biosynthesis; precorrin-2 from uroporphyrinogen III: step 1/1. It functions in the pathway porphyrin-containing compound metabolism; siroheme biosynthesis; siroheme from sirohydrochlorin: step 1/1. Its pathway is porphyrin-containing compound metabolism; siroheme biosynthesis; sirohydrochlorin from precorrin-2: step 1/1. Functionally, multifunctional enzyme that catalyzes the SAM-dependent methylations of uroporphyrinogen III at position C-2 and C-7 to form precorrin-2 via precorrin-1. Then it catalyzes the NAD-dependent ring dehydrogenation of precorrin-2 to yield sirohydrochlorin. Finally, it catalyzes the ferrochelation of sirohydrochlorin to yield siroheme. The chain is Siroheme synthase from Hydrogenovibrio crunogenus (strain DSM 25203 / XCL-2) (Thiomicrospira crunogena).